The following is a 67-amino-acid chain: UPF0181 protein KPK_1966 (67 aa).

The interval 48–67 (EQIVARFEDEDEDQDEDEDD) is disordered. The segment covering 55–67 (EDEDEDQDEDEDD) has biased composition (acidic residues).

This sequence belongs to the UPF0181 family.

The polypeptide is UPF0181 protein KPK_1966 (Klebsiella pneumoniae (strain 342)).